The chain runs to 101 residues: RNA-binding protein Hfq (101 aa).

A Sm domain is found at 9 to 68 (DPYLNALRRERIPVSIYLVNGIKLQGQIESFDQFIILLKNTVSQMVYKHAISTVVPARSI). Positions 68–91 (ISHNNNGSSQAQAPQQAVQTTQPV) are disordered. Low complexity predominate over residues 77 to 91 (QAQAPQQAVQTTQPV).

It belongs to the Hfq family. As to quaternary structure, homohexamer.

In terms of biological role, RNA chaperone that binds small regulatory RNA (sRNAs) and mRNAs to facilitate mRNA translational regulation in response to envelope stress, environmental stress and changes in metabolite concentrations. Also binds with high specificity to tRNAs. In Haemophilus ducreyi (strain 35000HP / ATCC 700724), this protein is RNA-binding protein Hfq.